The following is a 252-amino-acid chain: Cell division protein ZapD (252 aa).

The protein belongs to the ZapD family. As to quaternary structure, interacts with FtsZ.

The protein resides in the cytoplasm. Its function is as follows. Cell division factor that enhances FtsZ-ring assembly. Directly interacts with FtsZ and promotes bundling of FtsZ protofilaments, with a reduction in FtsZ GTPase activity. The polypeptide is Cell division protein ZapD (Ralstonia pickettii (strain 12J)).